Reading from the N-terminus, the 193-residue chain is MNFLAHLHLAHLAESSLSGNLLADFVRGNPEESFPPDVVAGIHMHRRIDVLTDNLPEVREAREWFRRETRRVAPITLDVMWDHFLSRHWSQLSPDFPLQEFICYARKQVMTILPDSPPRFINLNNYLWSEQWLVRYRDMDFIQNVLNGMASRRPRLDALRDSWYDLNAHYTALGTRFWQFYPRMMAQASHKAL.

It belongs to the AcpH family.

It catalyses the reaction holo-[ACP] + H2O = apo-[ACP] + (R)-4'-phosphopantetheine + H(+). Its function is as follows. Converts holo-ACP to apo-ACP by hydrolytic cleavage of the phosphopantetheine prosthetic group from ACP. The chain is Acyl carrier protein phosphodiesterase from Shigella boydii serotype 4 (strain Sb227).